The following is an 863-amino-acid chain: FO synthase (863 aa).

2 Radical SAM core domains span residues 91–343 (ITYS…APPN) and 551–792 (VTFV…SHIQ). The cofG-like stretch occupies residues 92 to 424 (TYSRKVFIPV…PRVRGHVVAL (333 aa)). [4Fe-4S] cluster contacts are provided by Cys-105, Cys-109, Cys-112, Cys-565, Cys-569, and Cys-572. A cofH-like region spans residues 528-861 (DGPALEAVTA…RQRTTTYALR (334 aa)).

The protein in the N-terminal section; belongs to the radical SAM superfamily. CofG family. This sequence in the C-terminal section; belongs to the radical SAM superfamily. CofH family. Requires [4Fe-4S] cluster as cofactor.

It catalyses the reaction 5-amino-6-(D-ribitylamino)uracil + L-tyrosine + S-adenosyl-L-methionine = 5-amino-5-(4-hydroxybenzyl)-6-(D-ribitylimino)-5,6-dihydrouracil + 2-iminoacetate + 5'-deoxyadenosine + L-methionine + H(+). It carries out the reaction 5-amino-5-(4-hydroxybenzyl)-6-(D-ribitylimino)-5,6-dihydrouracil + S-adenosyl-L-methionine = 7,8-didemethyl-8-hydroxy-5-deazariboflavin + 5'-deoxyadenosine + L-methionine + NH4(+) + H(+). It functions in the pathway cofactor biosynthesis; coenzyme F0 biosynthesis. Catalyzes the radical-mediated synthesis of 7,8-didemethyl-8-hydroxy-5-deazariboflavin (FO) from 5-amino-6-(D-ribitylamino)uracil and L-tyrosine. This Mycobacterium leprae (strain TN) protein is FO synthase (fbiC).